We begin with the raw amino-acid sequence, 641 residues long: Epithelial sodium channel subunit beta (641 aa).

Over Met-1–Ala-50 the chain is Cytoplasmic. A helical transmembrane segment spans residues Met-51–Ile-71. Residues Lys-72 to Gly-533 are Extracellular-facing. Disulfide bonds link Cys-98–Cys-273, Cys-185–Cys-190, Cys-197–Cys-204, Cys-250–Cys-257, Cys-362–Cys-449, Cys-387–Cys-445, Cys-391–Cys-441, Cys-400–Cys-427, and Cys-402–Cys-416. N-linked (GlcNAc...) asparagine glycosylation is present at Asn-141. Asn-261 and Asn-379 each carry an N-linked (GlcNAc...) asparagine glycan. The chain crosses the membrane as a helical span at residues Ser-534–Ile-554. Over Lys-555–Val-641 the chain is Cytoplasmic. The disordered stretch occupies residues Gly-596–Val-641. Positions Pro-617–Tyr-621 match the PY motif; recruits WW domain-containing proteins and is thereby required for ubiquitination and inhibition of the channel by NEDD4 and NEDD4L motif. Over residues Val-632–Val-641 the composition is skewed to acidic residues. Phosphoserine is present on residues Ser-634 and Ser-636.

Belongs to the amiloride-sensitive sodium channel (TC 1.A.6) family. SCNN1B subfamily. Component of the heterotrimeric epithelial sodium channel (ENaC) composed of an alpha/SCNN1A, a beta/SCNN1B and a gamma/SCNN1G subunit. Interacts with WWP1 (via WW domains). Interacts with WWP2 (via WW domains); inhibits the channel. Interacts with the full-length immature form of PCSK9 (pro-PCSK9). Interacts (N-glycosylated) with BPIFA1; the interaction is direct and inhibits the proteolytic processing of SCNN1A and SCNN1G and the activation of ENaC. Post-translationally, ubiquitinated. Can be ubiquitinated at multiple sites and undergo monoubiquitination and polyubiquitination. Ubiquitination by NEDD4 or NEDD4L inhibits the ENaC channel through endocytosis, intracellular retention and degradation of its individual subunits. However, some studies could not confirm the ubiquitination of this subunit of the ENaC. In terms of processing, phosphorylated on serine and threonine residues. Aldosterone and insulin increase the basal level of phosphorylation. N-glycosylated. N-glycosylation is required for interaction with BPIFA1.

It is found in the apical cell membrane. It localises to the cytoplasmic vesicle membrane. The enzyme catalyses Na(+)(in) = Na(+)(out). Originally identified and characterized by its inhibition by the diuretic drug amiloride. In terms of biological role, this is one of the three pore-forming subunits of the heterotrimeric epithelial sodium channel (ENaC), a critical regulator of sodium balance and fluid homeostasis. ENaC operates in epithelial tissues, where it mediates the electrodiffusion of sodium ions from extracellular fluid through the apical membrane of cells, with water following osmotically. It plays a key role in maintaining sodium homeostasis through electrogenic sodium reabsorption in the kidneys. Additionally, ENaC is essential for airway surface liquid homeostasis, which is crucial for proper mucus clearance. This Oryctolagus cuniculus (Rabbit) protein is Epithelial sodium channel subunit beta.